The chain runs to 339 residues: UDP-N-acetylenolpyruvoylglucosamine reductase (339 aa).

In terms of domain architecture, FAD-binding PCMH-type spans 19-189 (VDVQARLFAE…LRVRFKLSRV (171 aa)). Arg166 is an active-site residue. Ser239 functions as the Proton donor in the catalytic mechanism. Residue Glu335 is part of the active site.

This sequence belongs to the MurB family. The cofactor is FAD.

The protein localises to the cytoplasm. It carries out the reaction UDP-N-acetyl-alpha-D-muramate + NADP(+) = UDP-N-acetyl-3-O-(1-carboxyvinyl)-alpha-D-glucosamine + NADPH + H(+). It participates in cell wall biogenesis; peptidoglycan biosynthesis. Functionally, cell wall formation. In Pseudomonas savastanoi pv. phaseolicola (strain 1448A / Race 6) (Pseudomonas syringae pv. phaseolicola (strain 1448A / Race 6)), this protein is UDP-N-acetylenolpyruvoylglucosamine reductase.